Here is a 208-residue protein sequence, read N- to C-terminus: Probable molybdenum cofactor guanylyltransferase (208 aa).

Residues 12 to 14, Lys24, Asp72, and Asp101 contribute to the GTP site; that span reads IAG. Asp101 is a binding site for Mg(2+).

It belongs to the MobA family. Mg(2+) is required as a cofactor.

The protein resides in the cytoplasm. It catalyses the reaction Mo-molybdopterin + GTP + H(+) = Mo-molybdopterin guanine dinucleotide + diphosphate. Its function is as follows. Transfers a GMP moiety from GTP to Mo-molybdopterin (Mo-MPT) cofactor (Moco or molybdenum cofactor) to form Mo-molybdopterin guanine dinucleotide (Mo-MGD) cofactor. The polypeptide is Probable molybdenum cofactor guanylyltransferase (Chloroflexus aggregans (strain MD-66 / DSM 9485)).